A 208-amino-acid polypeptide reads, in one-letter code: Large ribosomal subunit protein uL3 (208 aa).

Residues 123–146 (RHGQSRGPMAHGSRYHRRPGSMGP) are disordered.

The protein belongs to the universal ribosomal protein uL3 family. Part of the 50S ribosomal subunit. Forms a cluster with proteins L14 and L19.

One of the primary rRNA binding proteins, it binds directly near the 3'-end of the 23S rRNA, where it nucleates assembly of the 50S subunit. This is Large ribosomal subunit protein uL3 from Streptococcus thermophilus (strain CNRZ 1066).